A 271-amino-acid polypeptide reads, in one-letter code: D-methionine-binding lipoprotein MetQ (271 aa).

Residues 1–22 (MSLKFKSIAAISALIGTLTLVG) form the signal peptide. Residue Cys-23 is the site of N-palmitoyl cysteine attachment. Cys-23 is lipidated: S-diacylglycerol cysteine.

Belongs to the NlpA lipoprotein family.

It localises to the cell membrane. This protein is a component of a D-methionine permease, a binding protein-dependent, ATP-driven transport system. The sequence is that of D-methionine-binding lipoprotein MetQ (metQ) from Yersinia pestis.